Consider the following 315-residue polypeptide: 4-diphosphocytidyl-2-C-methyl-D-erythritol kinase (315 aa).

The active site involves Lys-10. Position 107–117 (107–117) interacts with ATP; that stretch reads PVAGGMAGGSA. Asp-148 is a catalytic residue. A disordered region spans residues 292-315; that stretch reads HPATSPVPGPAKNRGAHIVSIESE.

Belongs to the GHMP kinase family. IspE subfamily.

The enzyme catalyses 4-CDP-2-C-methyl-D-erythritol + ATP = 4-CDP-2-C-methyl-D-erythritol 2-phosphate + ADP + H(+). It participates in isoprenoid biosynthesis; isopentenyl diphosphate biosynthesis via DXP pathway; isopentenyl diphosphate from 1-deoxy-D-xylulose 5-phosphate: step 3/6. Catalyzes the phosphorylation of the position 2 hydroxy group of 4-diphosphocytidyl-2C-methyl-D-erythritol. This Corynebacterium efficiens (strain DSM 44549 / YS-314 / AJ 12310 / JCM 11189 / NBRC 100395) protein is 4-diphosphocytidyl-2-C-methyl-D-erythritol kinase.